A 606-amino-acid polypeptide reads, in one-letter code: Homeobox protein B-H1 (606 aa).

Polar residues predominate over residues 1-14 (MKDSMSILTQTPSE). Disordered regions lie at residues 1–65 (MKDS…PAVA), 104–188 (YKQQ…HPHA), 261–340 (APAG…AFTD), and 508–606 (AAAN…QIQV). Residues 21 to 40 (QLHHHLSHHHHPALHHHPVL) show a composition bias toward basic residues. Low complexity predominate over residues 41–65 (QHHYSLQQQHQQQQQQQPPAPPAVA). Residues 108-118 (QQHHHHHHQSH) show a composition bias toward basic residues. Over residues 119–138 (HNNNNHSGGSSGGTSPTHHN) the composition is skewed to low complexity. Positions 166 to 188 (HHLHPQSHPHPHPHPHSHPHPHA) are enriched in basic residues. Residues 266–284 (ELDDSSDYHEENEDCDSDE) show a composition bias toward acidic residues. The segment covering 286 to 295 (GSAGGGGGGS) has biased composition (gly residues). Residues 297 to 314 (HMDDHSVCSNGGKDDDGN) show a composition bias toward basic and acidic residues. Polar residues predominate over residues 315 to 325 (SIKSGSTSDMS). The segment at residues 331–390 (QRKARTAFTDHQLQTLEKSFERQKYLSVQERQELAHKLDLSDCQVKTWYQNRRTKWMRQT) is a DNA-binding region (homeobox). A compositionally biased stretch (pro residues) spans 513–522 (GGPPPPPPPS). Residues 523–534 (SAAAATGGSPSP) are compositionally biased toward low complexity. Residues 561–576 (ASPPLPLPLARPPSTP) show a composition bias toward pro residues.

The protein belongs to the Antp homeobox family. As to expression, abundant in the eye-antenna imaginal disk.

The protein localises to the nucleus. Its function is as follows. Functionally required in R1 and R6 receptor cells and primary pigment cells for normal eye development. In Drosophila ananassae (Fruit fly), this protein is Homeobox protein B-H1 (B-H1).